Here is a 165-residue protein sequence, read N- to C-terminus: Transcriptional repressor NrdR (165 aa).

Residues 3 to 34 fold into a zinc finger; that stretch reads CPYCGQLNNRVVDSRLSRSEFAVRRRRECLDC. An ATP-cone domain is found at 49-139; that stretch reads VMVVKKDGRR…VYREFKDVDD (91 aa).

The protein belongs to the NrdR family. Zn(2+) is required as a cofactor.

Functionally, negatively regulates transcription of bacterial ribonucleotide reductase nrd genes and operons by binding to NrdR-boxes. The polypeptide is Transcriptional repressor NrdR (Desulforapulum autotrophicum (strain ATCC 43914 / DSM 3382 / VKM B-1955 / HRM2) (Desulfobacterium autotrophicum)).